Consider the following 436-residue polypeptide: Trigger factor (436 aa).

Residues Gly163 to Pro248 form the PPIase FKBP-type domain.

Belongs to the FKBP-type PPIase family. Tig subfamily.

It localises to the cytoplasm. The catalysed reaction is [protein]-peptidylproline (omega=180) = [protein]-peptidylproline (omega=0). In terms of biological role, involved in protein export. Acts as a chaperone by maintaining the newly synthesized protein in an open conformation. Functions as a peptidyl-prolyl cis-trans isomerase. The chain is Trigger factor from Bordetella bronchiseptica (strain ATCC BAA-588 / NCTC 13252 / RB50) (Alcaligenes bronchisepticus).